The primary structure comprises 249 residues: Large ribosomal subunit protein uL4 (249 aa).

It belongs to the universal ribosomal protein uL4 family. As to quaternary structure, part of the 50S ribosomal subunit.

Functionally, one of the primary rRNA binding proteins, this protein initially binds near the 5'-end of the 23S rRNA. It is important during the early stages of 50S assembly. It makes multiple contacts with different domains of the 23S rRNA in the assembled 50S subunit and ribosome. Its function is as follows. Forms part of the polypeptide exit tunnel. This Methanoculleus marisnigri (strain ATCC 35101 / DSM 1498 / JR1) protein is Large ribosomal subunit protein uL4.